Reading from the N-terminus, the 145-residue chain is D-aminoacyl-tRNA deacylase (145 aa).

The short motif at 137–138 is the Gly-cisPro motif, important for rejection of L-amino acids element; that stretch reads GP.

Belongs to the DTD family. As to quaternary structure, homodimer.

Its subcellular location is the cytoplasm. It carries out the reaction glycyl-tRNA(Ala) + H2O = tRNA(Ala) + glycine + H(+). The catalysed reaction is a D-aminoacyl-tRNA + H2O = a tRNA + a D-alpha-amino acid + H(+). Functionally, an aminoacyl-tRNA editing enzyme that deacylates mischarged D-aminoacyl-tRNAs. Also deacylates mischarged glycyl-tRNA(Ala), protecting cells against glycine mischarging by AlaRS. Acts via tRNA-based rather than protein-based catalysis; rejects L-amino acids rather than detecting D-amino acids in the active site. By recycling D-aminoacyl-tRNA to D-amino acids and free tRNA molecules, this enzyme counteracts the toxicity associated with the formation of D-aminoacyl-tRNA entities in vivo and helps enforce protein L-homochirality. The chain is D-aminoacyl-tRNA deacylase from Pseudomonas savastanoi pv. phaseolicola (strain 1448A / Race 6) (Pseudomonas syringae pv. phaseolicola (strain 1448A / Race 6)).